Reading from the N-terminus, the 496-residue chain is NADP-dependent glyceraldehyde-3-phosphate dehydrogenase (496 aa).

Substrate contacts are provided by residues arginine 116 and 169–170 (NY). NADP(+) is bound by residues lysine 192, threonine 195, and aspartate 230. 245–249 (GGDTG) contributes to the NAD(+) binding site. Glutamate 264 functions as the Proton acceptor in the catalytic mechanism. 297-299 (RCT) contacts substrate. Cysteine 298 (nucleophile) is an active-site residue. An NADP(+)-binding site is contributed by glutamate 391. Serine 404 bears the Phosphoserine mark. Residue arginine 451 participates in substrate binding.

This sequence belongs to the aldehyde dehydrogenase family. In terms of assembly, interacts with 14-3-3 protein when phosphorylated. This interaction is released by divalent cations. In terms of processing, phosphorylated in shoots and non-photosynthetic tissues, but not in leaves.

The protein resides in the cytoplasm. It catalyses the reaction D-glyceraldehyde 3-phosphate + NADP(+) + H2O = (2R)-3-phosphoglycerate + NADPH + 2 H(+). With respect to regulation, insensitive to magnesium or calcium when dephosphorylated. When phosphorylated, 3-fold activation by magnesium or calcium, 2-fold activation by potassium, inhibited by ADP and AMP and insensitive to ATP or PPi. Its function is as follows. Important as a means of generating NADPH for biosynthetic reactions. The sequence is that of NADP-dependent glyceraldehyde-3-phosphate dehydrogenase (GAPN) from Triticum aestivum (Wheat).